A 283-amino-acid polypeptide reads, in one-letter code: Diaminopimelate epimerase (283 aa).

Residues Asn13 and Asn65 each coordinate substrate. Cys74 serves as the catalytic Proton donor. Substrate is bound by residues 75 to 76 (GN), Asn196, and 214 to 215 (ER). Cys223 acts as the Proton acceptor in catalysis. Position 224 to 225 (224 to 225 (GT)) interacts with substrate.

It belongs to the diaminopimelate epimerase family. As to quaternary structure, homodimer.

Its subcellular location is the cytoplasm. The catalysed reaction is (2S,6S)-2,6-diaminopimelate = meso-2,6-diaminopimelate. The protein operates within amino-acid biosynthesis; L-lysine biosynthesis via DAP pathway; DL-2,6-diaminopimelate from LL-2,6-diaminopimelate: step 1/1. Its function is as follows. Catalyzes the stereoinversion of LL-2,6-diaminopimelate (L,L-DAP) to meso-diaminopimelate (meso-DAP), a precursor of L-lysine and an essential component of the bacterial peptidoglycan. This chain is Diaminopimelate epimerase, found in Alkaliphilus metalliredigens (strain QYMF).